We begin with the raw amino-acid sequence, 346 residues long: UDP-3-O-acylglucosamine N-acyltransferase (346 aa).

H253 functions as the Proton acceptor in the catalytic mechanism.

This sequence belongs to the transferase hexapeptide repeat family. LpxD subfamily. As to quaternary structure, homotrimer.

It carries out the reaction a UDP-3-O-[(3R)-3-hydroxyacyl]-alpha-D-glucosamine + a (3R)-hydroxyacyl-[ACP] = a UDP-2-N,3-O-bis[(3R)-3-hydroxyacyl]-alpha-D-glucosamine + holo-[ACP] + H(+). It participates in bacterial outer membrane biogenesis; LPS lipid A biosynthesis. Catalyzes the N-acylation of UDP-3-O-acylglucosamine using 3-hydroxyacyl-ACP as the acyl donor. Is involved in the biosynthesis of lipid A, a phosphorylated glycolipid that anchors the lipopolysaccharide to the outer membrane of the cell. In Rickettsia felis (strain ATCC VR-1525 / URRWXCal2) (Rickettsia azadi), this protein is UDP-3-O-acylglucosamine N-acyltransferase.